The primary structure comprises 643 residues: Threonine--tRNA ligase (643 aa).

One can recognise a TGS domain in the interval 1-61 (MIKVTLKDGS…KEDVSLSICT (61 aa)). Positions 240–540 (DHNKLGRELK…LIEKYAGAFP (301 aa)) are catalytic. Cys335, His386, and His517 together coordinate Zn(2+).

The protein belongs to the class-II aminoacyl-tRNA synthetase family. In terms of assembly, homodimer. It depends on Zn(2+) as a cofactor.

The protein resides in the cytoplasm. The catalysed reaction is tRNA(Thr) + L-threonine + ATP = L-threonyl-tRNA(Thr) + AMP + diphosphate + H(+). Catalyzes the attachment of threonine to tRNA(Thr) in a two-step reaction: L-threonine is first activated by ATP to form Thr-AMP and then transferred to the acceptor end of tRNA(Thr). Also edits incorrectly charged L-seryl-tRNA(Thr). In Clostridium botulinum (strain Eklund 17B / Type B), this protein is Threonine--tRNA ligase.